The primary structure comprises 501 residues: Probable cytosol aminopeptidase (501 aa).

2 residues coordinate Mn(2+): lysine 268 and aspartate 273. The active site involves lysine 280. Aspartate 291, aspartate 350, and glutamate 352 together coordinate Mn(2+). Residue arginine 354 is part of the active site.

The protein belongs to the peptidase M17 family. The cofactor is Mn(2+).

The protein resides in the cytoplasm. It carries out the reaction Release of an N-terminal amino acid, Xaa-|-Yaa-, in which Xaa is preferably Leu, but may be other amino acids including Pro although not Arg or Lys, and Yaa may be Pro. Amino acid amides and methyl esters are also readily hydrolyzed, but rates on arylamides are exceedingly low.. It catalyses the reaction Release of an N-terminal amino acid, preferentially leucine, but not glutamic or aspartic acids.. In terms of biological role, presumably involved in the processing and regular turnover of intracellular proteins. Catalyzes the removal of unsubstituted N-terminal amino acids from various peptides. The polypeptide is Probable cytosol aminopeptidase (Pseudoalteromonas atlantica (strain T6c / ATCC BAA-1087)).